We begin with the raw amino-acid sequence, 252 residues long: tRNA (guanine-N(1)-)-methyltransferase (252 aa).

Residues Gly113 and 133–138 (IGDYVL) contribute to the S-adenosyl-L-methionine site. Low complexity predominate over residues 229–238 (VARPAANAPA). Residues 229 to 252 (VARPAANAPAKGESQKTPKNKTDG) form a disordered region. The span at 241–252 (ESQKTPKNKTDG) shows a compositional bias: basic and acidic residues.

Belongs to the RNA methyltransferase TrmD family. Homodimer.

It is found in the cytoplasm. The catalysed reaction is guanosine(37) in tRNA + S-adenosyl-L-methionine = N(1)-methylguanosine(37) in tRNA + S-adenosyl-L-homocysteine + H(+). Specifically methylates guanosine-37 in various tRNAs. This Rhodopseudomonas palustris (strain HaA2) protein is tRNA (guanine-N(1)-)-methyltransferase.